The primary structure comprises 351 residues: Riboflavin-binding protein RibY (351 aa).

Positions M1–A19 are cleaved as a signal peptide. C20 carries N-palmitoyl cysteine lipidation. C20 carries the S-diacylglycerol cysteine lipid modification.

This sequence belongs to the NMT1 family. As to quaternary structure, the complex is likely composed of an ATP-binding protein, a transmembrane protein (RibX) and a solute-binding protein (RibY).

It localises to the cell membrane. Part of an ABC transporter complex that transports riboflavin into the cell. Binds riboflavin. The polypeptide is Riboflavin-binding protein RibY (Chloroflexus aurantiacus (strain ATCC 29366 / DSM 635 / J-10-fl)).